The sequence spans 314 residues: Lipoyl synthase (314 aa).

Cysteine 40, cysteine 45, cysteine 51, cysteine 67, cysteine 71, cysteine 74, and serine 280 together coordinate [4Fe-4S] cluster. Positions 53-269 constitute a Radical SAM core domain; sequence SERKTATFMI…KNIALEKGFS (217 aa).

Belongs to the radical SAM superfamily. Lipoyl synthase family. It depends on [4Fe-4S] cluster as a cofactor.

It is found in the cytoplasm. It catalyses the reaction [[Fe-S] cluster scaffold protein carrying a second [4Fe-4S](2+) cluster] + N(6)-octanoyl-L-lysyl-[protein] + 2 oxidized [2Fe-2S]-[ferredoxin] + 2 S-adenosyl-L-methionine + 4 H(+) = [[Fe-S] cluster scaffold protein] + N(6)-[(R)-dihydrolipoyl]-L-lysyl-[protein] + 4 Fe(3+) + 2 hydrogen sulfide + 2 5'-deoxyadenosine + 2 L-methionine + 2 reduced [2Fe-2S]-[ferredoxin]. The protein operates within protein modification; protein lipoylation via endogenous pathway; protein N(6)-(lipoyl)lysine from octanoyl-[acyl-carrier-protein]. Catalyzes the radical-mediated insertion of two sulfur atoms into the C-6 and C-8 positions of the octanoyl moiety bound to the lipoyl domains of lipoate-dependent enzymes, thereby converting the octanoylated domains into lipoylated derivatives. The chain is Lipoyl synthase from Oceanobacillus iheyensis (strain DSM 14371 / CIP 107618 / JCM 11309 / KCTC 3954 / HTE831).